We begin with the raw amino-acid sequence, 146 residues long: Large ribosomal subunit protein bL19 (146 aa).

Residues 116 to 146 form a disordered region; sequence ADRKRIDQDRAAERAAKEEAQKAQEPKASQE. Positions 119 to 146 are enriched in basic and acidic residues; it reads KRIDQDRAAERAAKEEAQKAQEPKASQE.

As to quaternary structure, part of the 50S risobomal subunit. Contacts protein L14. Forms a bridge to the 30S subunit in the 70S ribosome, contacting the 16S rRNA.

Contacts the 16S rRNA of the 30S subunit (part of bridge B6), connecting the 2 subunits. The polypeptide is Large ribosomal subunit protein bL19 (rplS) (Thermus thermophilus (strain ATCC 27634 / DSM 579 / HB8)).